Reading from the N-terminus, the 364-residue chain is V-type proton ATPase subunit d (364 aa).

It belongs to the V-ATPase V0D/AC39 subunit family. In terms of assembly, V-ATPase is a heteromultimeric enzyme composed of a peripheral catalytic V1 complex (components A to H) attached to an integral membrane V0 proton pore complex (components: a, c, c', c'', d, e, f and VOA1).

It is found in the vacuole membrane. Subunit of the V0 complex of vacuolar(H+)-ATPase (V-ATPase), a multisubunit enzyme composed of a peripheral complex (V1) that hydrolyzes ATP and a membrane integral complex (V0) that translocates protons. V-ATPase is responsible for acidifying and maintaining the pH of intracellular compartments. This subunit is a non-integral membrane component of the membrane pore domain and is required for proper assembly of the V0 sector. Might be involved in the regulated assembly of V1 subunits onto the membrane sector or alternatively may prevent the passage of protons through V0 pores. This is V-type proton ATPase subunit d from Neurospora crassa (strain ATCC 24698 / 74-OR23-1A / CBS 708.71 / DSM 1257 / FGSC 987).